The sequence spans 359 residues: DNA integrity scanning protein DisA (359 aa).

The DAC domain maps to 7–146 (DEVLRQTLAI…NRRYVLEGSD (140 aa)). ATP is bound by residues G74, L92, and 105–109 (TRHRT).

It belongs to the DisA family. In terms of assembly, homooctamer. Mg(2+) is required as a cofactor.

The catalysed reaction is 2 ATP = 3',3'-c-di-AMP + 2 diphosphate. Participates in a DNA-damage check-point. DisA forms globular foci that rapidly scan along the chromosomes searching for lesions. In terms of biological role, also has diadenylate cyclase activity, catalyzing the condensation of 2 ATP molecules into cyclic di-AMP (c-di-AMP). c-di-AMP likely acts as a signaling molecule that may couple DNA integrity with a cellular process. This chain is DNA integrity scanning protein DisA, found in Kineococcus radiotolerans (strain ATCC BAA-149 / DSM 14245 / SRS30216).